A 176-amino-acid chain; its full sequence is Nucleoside triphosphate/diphosphate phosphatase (176 aa).

Arg-23 acts as the Proton donor in catalysis. Residues Asn-87, Asp-103, Asp-105, Asp-107, Asp-120, and Glu-123 each coordinate Mg(2+).

It belongs to the Ntdp family. Mg(2+) serves as cofactor.

It catalyses the reaction a ribonucleoside 5'-triphosphate + H2O = a ribonucleoside 5'-diphosphate + phosphate + H(+). It carries out the reaction a ribonucleoside 5'-diphosphate + H2O = a ribonucleoside 5'-phosphate + phosphate + H(+). Functionally, has nucleoside phosphatase activity towards nucleoside triphosphates and nucleoside diphosphates. The sequence is that of Nucleoside triphosphate/diphosphate phosphatase from Bacillus anthracis (strain A0248).